The primary structure comprises 1034 residues: Phosphoenolpyruvate carboxylase (1034 aa).

Catalysis depends on residues H203 and K680.

Belongs to the PEPCase type 1 family. It depends on Mg(2+) as a cofactor.

It catalyses the reaction oxaloacetate + phosphate = phosphoenolpyruvate + hydrogencarbonate. Forms oxaloacetate, a four-carbon dicarboxylic acid source for the tricarboxylic acid cycle. The chain is Phosphoenolpyruvate carboxylase (ppc) from Synechocystis sp. (strain ATCC 27184 / PCC 6803 / Kazusa).